We begin with the raw amino-acid sequence, 369 residues long: Anhydro-N-acetylmuramic acid kinase (369 aa).

An ATP-binding site is contributed by 12–19 (GTSLDGVD).

It belongs to the anhydro-N-acetylmuramic acid kinase family.

The catalysed reaction is 1,6-anhydro-N-acetyl-beta-muramate + ATP + H2O = N-acetyl-D-muramate 6-phosphate + ADP + H(+). Its pathway is amino-sugar metabolism; 1,6-anhydro-N-acetylmuramate degradation. It functions in the pathway cell wall biogenesis; peptidoglycan recycling. Its function is as follows. Catalyzes the specific phosphorylation of 1,6-anhydro-N-acetylmuramic acid (anhMurNAc) with the simultaneous cleavage of the 1,6-anhydro ring, generating MurNAc-6-P. Is required for the utilization of anhMurNAc either imported from the medium or derived from its own cell wall murein, and thus plays a role in cell wall recycling. The polypeptide is Anhydro-N-acetylmuramic acid kinase (Shigella flexneri).